Here is a 238-residue protein sequence, read N- to C-terminus: Uracil-DNA glycosylase (238 aa).

Residue Asp-72 is the Proton acceptor of the active site.

The protein belongs to the uracil-DNA glycosylase (UDG) superfamily. UNG family.

It localises to the cytoplasm. The catalysed reaction is Hydrolyzes single-stranded DNA or mismatched double-stranded DNA and polynucleotides, releasing free uracil.. Excises uracil residues from the DNA which can arise as a result of misincorporation of dUMP residues by DNA polymerase or due to deamination of cytosine. The protein is Uracil-DNA glycosylase of Chromobacterium violaceum (strain ATCC 12472 / DSM 30191 / JCM 1249 / CCUG 213 / NBRC 12614 / NCIMB 9131 / NCTC 9757 / MK).